The primary structure comprises 367 residues: Multifunctional tryptophan biosynthesis protein (367 aa).

The region spanning 7-201 (NVVMIDNYDS…LNVSGGYWEE (195 aa)) is the Glutamine amidotransferase type-1 domain. An L-glutamine-binding site is contributed by 58-60 (GPG). The active-site Nucleophile; for GATase activity is Cys-86. Residues Gln-90 and 136 to 137 (SL) contribute to the L-glutamine site. Active-site for GATase activity residues include His-175 and Glu-177. The tract at residues 209-367 (RKESILEKIY…TVLLIVKMLS (159 aa)) is indole-3-glycerol phosphate synthase.

Tetramer of two components I and two components II.

It carries out the reaction chorismate + L-glutamine = anthranilate + pyruvate + L-glutamate + H(+). It catalyses the reaction 1-(2-carboxyphenylamino)-1-deoxy-D-ribulose 5-phosphate + H(+) = (1S,2R)-1-C-(indol-3-yl)glycerol 3-phosphate + CO2 + H2O. It functions in the pathway amino-acid biosynthesis; L-tryptophan biosynthesis; L-tryptophan from chorismate: step 1/5. The protein operates within amino-acid biosynthesis; L-tryptophan biosynthesis; L-tryptophan from chorismate: step 4/5. The chain is Multifunctional tryptophan biosynthesis protein from Pichia angusta (Yeast).